Consider the following 228-residue polypeptide: Phosphoglycolate phosphatase (228 aa).

The active-site Nucleophile is D9. Residues D9 and D11 each coordinate Mg(2+). Residue K151 participates in substrate binding. Mg(2+) contacts are provided by D174 and D178.

The protein belongs to the archaeal SPP-like hydrolase family. The cofactor is Mg(2+).

It carries out the reaction 2-phosphoglycolate + H2O = glycolate + phosphate. Catalyzes the dephosphorylation of 2-phosphoglycolate. The polypeptide is Phosphoglycolate phosphatase (Pyrobaculum neutrophilum (strain DSM 2338 / JCM 9278 / NBRC 100436 / V24Sta) (Thermoproteus neutrophilus)).